The following is a 208-amino-acid chain: Ubiquitin-conjugating enzyme E2 S (208 aa).

Residues 14 to 160 (QTIRQVMKEL…ARMMTEIHAQ (147 aa)) enclose the UBC core domain. The active-site Glycyl thioester intermediate is the C98. The disordered stretch occupies residues 161–193 (PAKCGAGASDAKDDDGPSTKKHAGLDKKLQDKK). Basic and acidic residues predominate over residues 170–193 (DAKDDDGPSTKKHAGLDKKLQDKK).

Belongs to the ubiquitin-conjugating enzyme family.

The enzyme catalyses S-ubiquitinyl-[E1 ubiquitin-activating enzyme]-L-cysteine + [E2 ubiquitin-conjugating enzyme]-L-cysteine = [E1 ubiquitin-activating enzyme]-L-cysteine + S-ubiquitinyl-[E2 ubiquitin-conjugating enzyme]-L-cysteine.. It functions in the pathway protein modification; protein ubiquitination. In terms of biological role, catalyzes the covalent attachment of ubiquitin to other proteins. Acts as an essential factor of the anaphase promoting complex/cyclosome (APC/C), a cell cycle-regulated ubiquitin ligase that controls progression through mitosis. Acts by specifically elongating polyubiquitin chains initiated by the E2 enzyme vih/UbcH10 on APC/C substrates, enhancing the degradation of APC/C substrates by the proteasome and promoting mitotic exit. In Drosophila virilis (Fruit fly), this protein is Ubiquitin-conjugating enzyme E2 S.